The primary structure comprises 252 residues: Hydroxyacylglutathione hydrolase (252 aa).

Residues His54, His56, Asp58, His59, His113, Asp132, and His170 each contribute to the Zn(2+) site.

It belongs to the metallo-beta-lactamase superfamily. Glyoxalase II family. In terms of assembly, monomer. Zn(2+) serves as cofactor.

It catalyses the reaction an S-(2-hydroxyacyl)glutathione + H2O = a 2-hydroxy carboxylate + glutathione + H(+). It participates in secondary metabolite metabolism; methylglyoxal degradation; (R)-lactate from methylglyoxal: step 2/2. Thiolesterase that catalyzes the hydrolysis of S-D-lactoyl-glutathione to form glutathione and D-lactic acid. In Synechococcus sp. (strain JA-2-3B'a(2-13)) (Cyanobacteria bacterium Yellowstone B-Prime), this protein is Hydroxyacylglutathione hydrolase.